The primary structure comprises 152 residues: Methylglyoxal synthase (152 aa).

The MGS-like domain occupies 6–152 (RTIPAQKHIA…YQRYLQDRLK (147 aa)). Substrate-binding positions include His-19, Lys-23, 45 to 48 (TGTT), and 65 to 66 (SG). The active-site Proton donor/acceptor is the Asp-71. His-98 is a substrate binding site.

The protein belongs to the methylglyoxal synthase family.

It carries out the reaction dihydroxyacetone phosphate = methylglyoxal + phosphate. Catalyzes the formation of methylglyoxal from dihydroxyacetone phosphate. This chain is Methylglyoxal synthase, found in Pectobacterium atrosepticum (strain SCRI 1043 / ATCC BAA-672) (Erwinia carotovora subsp. atroseptica).